Consider the following 349-residue polypeptide: MVRAKRKLDHIEYALSTGQSRTHGFHDIDFVHQSLPNSSYETITCETKIGELSLSSPIFINAMTGGGGEKTLHINEQLAYVAKHHNLAMAVGSQMAALKDESEAASYKIIRKVNPNGIFFANLGSEATIEQAERAVDMIEANALQIHLNVIQELTMPEGDRDFTGVLQRIEKIVLNSKVPVIVKEVGFGMSKETMQQLASVGVTAIDIGGQGGTNFAAVENERRQRMLSYFNNWGIQTATSIIEATSTNNNLSFIASGGIQTALDVAKAIALGANTTAFAGYFLRILMEDGIEKLVDEIDLLHTDLKFIMTALGAKTIEELQSVPLVIKGETYHWLTQRGIDTTHYSRR.

Residue 6 to 7 (RK) participates in substrate binding. FMN contacts are provided by residues 62–64 (AMT), Ser-93, and Asn-122. Residue Gln-152 coordinates substrate. Glu-153 provides a ligand contact to Mg(2+). FMN contacts are provided by residues Lys-184, Thr-214, 258–259 (GG), and 280–281 (AG).

Belongs to the IPP isomerase type 2 family. Homooctamer. Dimer of tetramers. FMN is required as a cofactor. Requires NADPH as cofactor. It depends on Mg(2+) as a cofactor.

The protein resides in the cytoplasm. It catalyses the reaction isopentenyl diphosphate = dimethylallyl diphosphate. In terms of biological role, involved in the biosynthesis of isoprenoids. Catalyzes the 1,3-allylic rearrangement of the homoallylic substrate isopentenyl (IPP) to its allylic isomer, dimethylallyl diphosphate (DMAPP). The polypeptide is Isopentenyl-diphosphate delta-isomerase (Bacillus cereus (strain ZK / E33L)).